The chain runs to 170 residues: UPF0220 protein C8D2.02c (170 aa).

Helical transmembrane passes span 23 to 43 (LGVY…VDAA), 54 to 74 (LHIT…IVIV), 101 to 121 (ILFI…TVFI), and 136 to 156 (MGSA…ALWI).

It belongs to the UPF0220 family.

It is found in the membrane. This is UPF0220 protein C8D2.02c from Schizosaccharomyces pombe (strain 972 / ATCC 24843) (Fission yeast).